A 159-amino-acid polypeptide reads, in one-letter code: Disulfide bond formation protein B (159 aa).

Residues 1–8 (MQANSRAF) are Cytoplasmic-facing. The helical transmembrane segment at 9-25 (FLLIAVIAFGLVGYALY) threads the bilayer. Residues 26–43 (LQHVEGLQPCPLCVLQRF) lie on the Periplasmic side of the membrane. Cys35 and Cys38 form a disulfide bridge. The helical transmembrane segment at 44-57 (AFVGIGVFSLLAAL) threads the bilayer. The Cytoplasmic segment spans residues 58-63 (SSATRL). The helical transmembrane segment at 64 to 81 (LWHGLGMLSGLGGIFVAG) threads the bilayer. Topologically, residues 82–136 (YHVSLLLNPKASCGIDPIENWVNALPTAKWLPQVFESDGLCTAPLPPVLGVSIPL) are periplasmic. A disulfide bond links Cys94 and Cys122. The helical transmembrane segment at 137–155 (WSLIWMVILALTLVVAMIR) threads the bilayer. Residues 156 to 159 (RERR) lie on the Cytoplasmic side of the membrane.

It belongs to the DsbB family.

Its subcellular location is the cell inner membrane. Required for disulfide bond formation in some periplasmic proteins. Acts by oxidizing the DsbA protein. The chain is Disulfide bond formation protein B from Ralstonia nicotianae (strain ATCC BAA-1114 / GMI1000) (Ralstonia solanacearum).